The sequence spans 79 residues: Raniseptin-9 (79 aa).

A signal peptide spans 1–22; that stretch reads MAFLKKSLFLVLFLGIVSLSIC. Residues 23–49 constitute a propeptide that is removed on maturation; the sequence is EEEKREGEEEEKQEEENEELSEEELRE. The disordered stretch occupies residues 27-46; it reads REGEEEEKQEEENEELSEEE. Residues 30–44 show a composition bias toward acidic residues; that stretch reads EEEEKQEEENEELSE.

The protein belongs to the frog skin active peptide (FSAP) family. Dermaseptin subfamily. Expressed by the skin glands.

Its subcellular location is the secreted. Functionally, has antibacterial activity. This Boana raniceps (Chaco tree frog) protein is Raniseptin-9.